Consider the following 183-residue polypeptide: Nucleoside triphosphate pyrophosphatase (183 aa).

The active-site Proton acceptor is the Asp-71.

The protein belongs to the Maf family. It depends on a divalent metal cation as a cofactor.

Its subcellular location is the cytoplasm. The catalysed reaction is a ribonucleoside 5'-triphosphate + H2O = a ribonucleoside 5'-phosphate + diphosphate + H(+). The enzyme catalyses a 2'-deoxyribonucleoside 5'-triphosphate + H2O = a 2'-deoxyribonucleoside 5'-phosphate + diphosphate + H(+). Nucleoside triphosphate pyrophosphatase. May have a dual role in cell division arrest and in preventing the incorporation of modified nucleotides into cellular nucleic acids. The protein is Nucleoside triphosphate pyrophosphatase of Campylobacter jejuni subsp. jejuni serotype O:2 (strain ATCC 700819 / NCTC 11168).